Here is a 541-residue protein sequence, read N- to C-terminus: Putative transferase YhbX (541 aa).

Residues 1-60 (MTVFNKFARSFKSHWLLYLSVIVFGITNLVASSGAHMVQRLLFFVLTILVVKRISSLPLR) lie on the Periplasmic side of the membrane. A helical transmembrane segment spans residues 61 to 81 (LLVAAPFVLLTAADMSISLYS). Residues 82–110 (WCTFGTTFNDGFAISVLQSDPDEVAKMLG) are Cytoplasmic-facing. Residues 111-131 (MYSPYLCAFAFLSLLFLAVII) form a helical membrane-spanning segment. The Periplasmic portion of the chain corresponds to 132–141 (KYDVSLPTKK). The helical transmembrane segment at 142 to 162 (VTGILLLIVISGSLFSACQFA) threads the bilayer. Residues 163–264 (YKDAKNKNAF…RKQIKLFNQA (102 aa)) are Cytoplasmic-facing. A helical transmembrane segment spans residues 265–285 (ISGAPYTALSVPLSLTADSVL). The Periplasmic segment spans residues 286–541 (SHDIHNYPDN…QGNPTPEGQG (256 aa)).

It belongs to the phosphoethanolamine transferase family.

The protein localises to the cell inner membrane. There are several lipid A forms in this strain, including a phosphoethanolamine (1-O-P-pEtN) form; overexpression of this gene does not lead to higher levels of the 1-O-P-pEtN form of lipid A. The sequence is that of Putative transferase YhbX (yhbX) from Escherichia coli O157:H7.